A 222-amino-acid polypeptide reads, in one-letter code: Charged multivesicular body protein 4b (222 aa).

Disordered stretches follow at residues 1–21 (MSLIGKLFGTGGKGAKGPSPQ) and 177–222 (NLLE…WATA). The stretch at 21 to 182 (QEAIQKLRDT…ELDKNLLEVQ (162 aa)) forms a coiled coil.

This sequence belongs to the SNF7 family. As to quaternary structure, probable core component of the endosomal sorting required for transport complex III (ESCRT-III). ESCRT-III components are thought to multimerize to form a flat lattice on the perimeter membrane of the endosome.

It localises to the cytoplasm. The protein resides in the cytosol. It is found in the late endosome membrane. The protein localises to the midbody. Its function is as follows. Probable core component of the endosomal sorting required for transport complex III (ESCRT-III) which is involved in multivesicular bodies (MVBs) formation and sorting of endosomal cargo proteins into MVBs. MVBs contain intraluminal vesicles (ILVs) that are generated by invagination and scission from the limiting membrane of the endosome and mostly are delivered to lysosomes enabling degradation of membrane proteins, such as stimulated growth factor receptors, lysosomal enzymes and lipids. In Xenopus laevis (African clawed frog), this protein is Charged multivesicular body protein 4b (chmp4b).